Reading from the N-terminus, the 527-residue chain is Peptide chain release factor 3 (527 aa).

The tr-type G domain occupies 9–277 (AKRRTFAIIS…AVVDWAPRPL (269 aa)). Residues 18 to 25 (SHPDAGKT), 86 to 90 (DTPGH), and 140 to 143 (NKLD) each bind GTP.

Belongs to the TRAFAC class translation factor GTPase superfamily. Classic translation factor GTPase family. PrfC subfamily.

The protein resides in the cytoplasm. Its function is as follows. Increases the formation of ribosomal termination complexes and stimulates activities of RF-1 and RF-2. It binds guanine nucleotides and has strong preference for UGA stop codons. It may interact directly with the ribosome. The stimulation of RF-1 and RF-2 is significantly reduced by GTP and GDP, but not by GMP. This is Peptide chain release factor 3 from Pseudomonas putida (strain W619).